A 376-amino-acid polypeptide reads, in one-letter code: MSGPLTERRQTILKLVIQEFVDTATPVASETLVRKYRLPVSPATVRNDMAALEELGFLTHPHTSGGRIPTDTGYRFFVENLMERTSLSPAEQRMIRHQFYQVRGELDQWVQLACAVLARTAHNASVATAPRAEQLRFKSLELISIHETMALAVIVFHGGIVKQQTLPVEPWRTPEDLRRAAGLVSDLLADATLTRVEELATAATFNGIPLSDFERGLVDLVVRAMIAFEEQAQEQIYSDGLLEMLSQPEFSPASGRDDAERVIERMRRTLEILKSGRGLGPLIPQALASGGVQVIIGGEHGEDTMRDYSVILARYGVEGVIAGVLGVIGPTRMAYPRSISTVRYIASLMNNLLAELYNVQARPSEGESEYKDEQHA.

It belongs to the HrcA family.

Functionally, negative regulator of class I heat shock genes (grpE-dnaK-dnaJ and groELS operons). Prevents heat-shock induction of these operons. The sequence is that of Heat-inducible transcription repressor HrcA from Chloroflexus aggregans (strain MD-66 / DSM 9485).